A 324-amino-acid chain; its full sequence is Pseudouridylate synthase RPUSD4, mitochondrial (324 aa).

Residues 1–11 constitute a mitochondrion transit peptide; it reads MAAAGGGATRG. The active site involves Asp-105.

Belongs to the pseudouridine synthase RluA family.

The protein resides in the mitochondrion matrix. It localises to the nucleus. It is found in the cytoplasm. It carries out the reaction uridine in 5S rRNA = pseudouridine in 5S rRNA. The enzyme catalyses a uridine in tRNA = a pseudouridine in tRNA. The catalysed reaction is a uridine in mRNA = a pseudouridine in mRNA. Catalyzes uridine to pseudouridine isomerization (pseudouridylation) of different mitochondrial RNA substrates. Acts on position 1397 in 16S mitochondrial ribosomal RNA (16S mt-rRNA). This modification is required for the assembly of 16S mt-rRNA into a functional mitochondrial ribosome. Acts on position 39 in mitochondrial tRNA(Phe). Also catalyzes pseudouridylation of mRNAs in nucleus: acts as a regulator of pre-mRNA splicing by mediating pseudouridylation of pre-mRNAs at locations associated with alternatively spliced regions. Pseudouridylation of pre-mRNAs near splice sites directly regulates mRNA splicing and mRNA 3'-end processing. This chain is Pseudouridylate synthase RPUSD4, mitochondrial, found in Xenopus tropicalis (Western clawed frog).